Here is a 283-residue protein sequence, read N- to C-terminus: Protein/nucleic acid deglycase HchA (283 aa).

Zn(2+) contacts are provided by H86, E91, and H123. The active-site Nucleophile is the C185.

Belongs to the peptidase C56 family. HchA subfamily. In terms of assembly, homodimer.

The protein localises to the cytoplasm. The enzyme catalyses N(omega)-(1-hydroxy-2-oxopropyl)-L-arginyl-[protein] + H2O = lactate + L-arginyl-[protein] + H(+). The catalysed reaction is N(6)-(1-hydroxy-2-oxopropyl)-L-lysyl-[protein] + H2O = lactate + L-lysyl-[protein] + H(+). It catalyses the reaction S-(1-hydroxy-2-oxopropyl)-L-cysteinyl-[protein] + H2O = lactate + L-cysteinyl-[protein] + H(+). It carries out the reaction N(omega)-(1-hydroxy-2-oxoethyl)-L-arginyl-[protein] + H2O = L-arginyl-[protein] + glycolate + H(+). The enzyme catalyses N(6)-(1-hydroxy-2-oxoethyl)-L-lysyl-[protein] + H2O = glycolate + L-lysyl-[protein] + H(+). The catalysed reaction is S-(1-hydroxy-2-oxoethyl)-L-cysteinyl-[protein] + H2O = glycolate + L-cysteinyl-[protein] + H(+). It catalyses the reaction N(2)-(1-hydroxy-2-oxopropyl)-dGTP + H2O = lactate + dGTP + H(+). It carries out the reaction N(2)-(1-hydroxy-2-oxopropyl)-GTP + H2O = lactate + GTP + H(+). The enzyme catalyses N(2)-(1-hydroxy-2-oxopropyl)-GDP + H2O = lactate + GDP + H(+). The catalysed reaction is N(2)-(1-hydroxy-2-oxopropyl)-GMP + H2O = lactate + GMP + H(+). It catalyses the reaction N(2)-(1-hydroxy-2-oxoethyl)-dGTP + H2O = dGTP + glycolate + H(+). It carries out the reaction N(2)-(1-hydroxy-2-oxoethyl)-GTP + H2O = glycolate + GTP + H(+). The enzyme catalyses N(2)-(1-hydroxy-2-oxoethyl)-GDP + H2O = glycolate + GDP + H(+). The catalysed reaction is N(2)-(1-hydroxy-2-oxoethyl)-GMP + H2O = glycolate + GMP + H(+). It catalyses the reaction an N(2)-(1-hydroxy-2-oxopropyl)-guanosine in RNA + H2O = a guanosine in RNA + lactate + H(+). It carries out the reaction an N(2)-(1-hydroxy-2-oxopropyl)-2'-deoxyguanosine in DNA + H2O = a 2'-deoxyguanosine in DNA + lactate + H(+). The enzyme catalyses an N(2)-(1-hydroxy-2-oxoethyl)-guanosine in RNA + H2O = a guanosine in RNA + glycolate + H(+). The catalysed reaction is an N(2)-(1-hydroxy-2-oxoethyl)-2'-deoxyguanosine in DNA + H2O = a 2'-deoxyguanosine in DNA + glycolate + H(+). Protein and nucleotide deglycase that catalyzes the deglycation of the Maillard adducts formed between amino groups of proteins or nucleotides and reactive carbonyl groups of glyoxals. Thus, functions as a protein deglycase that repairs methylglyoxal- and glyoxal-glycated proteins, and releases repaired proteins and lactate or glycolate, respectively. Deglycates cysteine, arginine and lysine residues in proteins, and thus reactivates these proteins by reversing glycation by glyoxals. Acts on early glycation intermediates (hemithioacetals and aminocarbinols), preventing the formation of Schiff bases and advanced glycation endproducts (AGE). Also functions as a nucleotide deglycase able to repair glycated guanine in the free nucleotide pool (GTP, GDP, GMP, dGTP) and in DNA and RNA. Is thus involved in a major nucleotide repair system named guanine glycation repair (GG repair), dedicated to reversing methylglyoxal and glyoxal damage via nucleotide sanitization and direct nucleic acid repair. Plays an important role in protecting cells from carbonyl stress. The sequence is that of Protein/nucleic acid deglycase HchA from Escherichia coli O45:K1 (strain S88 / ExPEC).